The primary structure comprises 177 residues: Iron-sulfur cluster assembly protein SufA (177 aa).

The first 18 residues, 1–18, serve as a signal peptide directing secretion; the sequence is MTIHIFLCFLLILKIVNA. Cys-101, Cys-169, and Cys-171 together coordinate [4Fe-4S] cluster.

This sequence belongs to the HesB/IscA family. As to quaternary structure, homodimer. Homotetramer formation is observed in vitro.

Its subcellular location is the plastid. The protein localises to the apicoplast. Its pathway is cofactor biosynthesis; iron-sulfur cluster biosynthesis. Its function is as follows. Participates in the sulfur mobilization (SUF) pathway for iron-sulfur (Fe-S) cluster biogenesis. Involved in the pre-assembly of [4Fe-4S] clusters and their transfer to target proteins. The polypeptide is Iron-sulfur cluster assembly protein SufA (Plasmodium falciparum (isolate 3D7)).